A 454-amino-acid chain; its full sequence is Bifunctional protein GlmU (454 aa).

Residues 1-226 form a pyrophosphorylase region; sequence MSTTVIILAA…AFEVEGVNDR (226 aa). UDP-N-acetyl-alpha-D-glucosamine is bound by residues 8 to 11, Lys22, Gln73, 78 to 79, 100 to 102, Gly137, Glu151, Asn166, and Asn224; these read LAAG, GT, and YGD. Asp102 lines the Mg(2+) pocket. Asn224 contributes to the Mg(2+) binding site. The tract at residues 227-247 is linker; it reads LQLAALEREFQKQQAKELMQQ. The segment at 248 to 454 is N-acetyltransferase; that stretch reads GVTFADPARF…NYQRPQKLKK (207 aa). Residues Arg330 and Lys348 each contribute to the UDP-N-acetyl-alpha-D-glucosamine site. His360 (proton acceptor) is an active-site residue. Tyr363 and Asn374 together coordinate UDP-N-acetyl-alpha-D-glucosamine. Residues Ala377, 383-384, Ser402, Ala420, and Arg437 each bind acetyl-CoA; that span reads NY.

The protein in the N-terminal section; belongs to the N-acetylglucosamine-1-phosphate uridyltransferase family. In the C-terminal section; belongs to the transferase hexapeptide repeat family. Homotrimer. Requires Mg(2+) as cofactor.

The protein resides in the cytoplasm. The enzyme catalyses alpha-D-glucosamine 1-phosphate + acetyl-CoA = N-acetyl-alpha-D-glucosamine 1-phosphate + CoA + H(+). The catalysed reaction is N-acetyl-alpha-D-glucosamine 1-phosphate + UTP + H(+) = UDP-N-acetyl-alpha-D-glucosamine + diphosphate. It functions in the pathway nucleotide-sugar biosynthesis; UDP-N-acetyl-alpha-D-glucosamine biosynthesis; N-acetyl-alpha-D-glucosamine 1-phosphate from alpha-D-glucosamine 6-phosphate (route II): step 2/2. It participates in nucleotide-sugar biosynthesis; UDP-N-acetyl-alpha-D-glucosamine biosynthesis; UDP-N-acetyl-alpha-D-glucosamine from N-acetyl-alpha-D-glucosamine 1-phosphate: step 1/1. The protein operates within bacterial outer membrane biogenesis; LPS lipid A biosynthesis. In terms of biological role, catalyzes the last two sequential reactions in the de novo biosynthetic pathway for UDP-N-acetylglucosamine (UDP-GlcNAc). The C-terminal domain catalyzes the transfer of acetyl group from acetyl coenzyme A to glucosamine-1-phosphate (GlcN-1-P) to produce N-acetylglucosamine-1-phosphate (GlcNAc-1-P), which is converted into UDP-GlcNAc by the transfer of uridine 5-monophosphate (from uridine 5-triphosphate), a reaction catalyzed by the N-terminal domain. The polypeptide is Bifunctional protein GlmU (Acinetobacter baumannii (strain AYE)).